A 697-amino-acid polypeptide reads, in one-letter code: tRNA 5-methylaminomethyl-2-thiouridine biosynthesis bifunctional protein MnmC (697 aa).

The tRNA (mnm(5)s(2)U34)-methyltransferase stretch occupies residues 1–275 (MTAKPHKSCQ…KPATLAAIDH (275 aa)). Residues 280–697 (VGGGLASANL…LRKLLKGKAL (418 aa)) are FAD-dependent cmnm(5)s(2)U34 oxidoreductase.

In the N-terminal section; belongs to the methyltransferase superfamily. tRNA (mnm(5)s(2)U34)-methyltransferase family. It in the C-terminal section; belongs to the DAO family. The cofactor is FAD.

The protein localises to the cytoplasm. It carries out the reaction 5-aminomethyl-2-thiouridine(34) in tRNA + S-adenosyl-L-methionine = 5-methylaminomethyl-2-thiouridine(34) in tRNA + S-adenosyl-L-homocysteine + H(+). Its function is as follows. Catalyzes the last two steps in the biosynthesis of 5-methylaminomethyl-2-thiouridine (mnm(5)s(2)U) at the wobble position (U34) in tRNA. Catalyzes the FAD-dependent demodification of cmnm(5)s(2)U34 to nm(5)s(2)U34, followed by the transfer of a methyl group from S-adenosyl-L-methionine to nm(5)s(2)U34, to form mnm(5)s(2)U34. This is tRNA 5-methylaminomethyl-2-thiouridine biosynthesis bifunctional protein MnmC from Shewanella sp. (strain ANA-3).